Consider the following 428-residue polypeptide: Enolase (428 aa).

Residue Q163 participates in (2R)-2-phosphoglycerate binding. E205 acts as the Proton donor in catalysis. Residues D242, E286, and D313 each coordinate Mg(2+). (2R)-2-phosphoglycerate is bound by residues K338, R367, S368, and K389. K338 (proton acceptor) is an active-site residue.

This sequence belongs to the enolase family. It depends on Mg(2+) as a cofactor.

Its subcellular location is the cytoplasm. It is found in the secreted. The protein resides in the cell surface. The enzyme catalyses (2R)-2-phosphoglycerate = phosphoenolpyruvate + H2O. Its pathway is carbohydrate degradation; glycolysis; pyruvate from D-glyceraldehyde 3-phosphate: step 4/5. In terms of biological role, catalyzes the reversible conversion of 2-phosphoglycerate (2-PG) into phosphoenolpyruvate (PEP). It is essential for the degradation of carbohydrates via glycolysis. The protein is Enolase of Acidovorax sp. (strain JS42).